Reading from the N-terminus, the 340-residue chain is Anthranilate phosphoribosyltransferase (340 aa).

Residues Gly-82, 85–86 (GD), Thr-90, 92–95 (NISS), 110–118 (KHGGRSVSS), and Ala-122 each bind 5-phospho-alpha-D-ribose 1-diphosphate. Gly-82 contacts anthranilate. Ser-94 contributes to the Mg(2+) binding site. Residue Arg-168 participates in anthranilate binding. Mg(2+) contacts are provided by Asp-227 and Glu-228.

The protein belongs to the anthranilate phosphoribosyltransferase family. As to quaternary structure, homodimer. Requires Mg(2+) as cofactor.

The enzyme catalyses N-(5-phospho-beta-D-ribosyl)anthranilate + diphosphate = 5-phospho-alpha-D-ribose 1-diphosphate + anthranilate. It participates in amino-acid biosynthesis; L-tryptophan biosynthesis; L-tryptophan from chorismate: step 2/5. Its function is as follows. Catalyzes the transfer of the phosphoribosyl group of 5-phosphorylribose-1-pyrophosphate (PRPP) to anthranilate to yield N-(5'-phosphoribosyl)-anthranilate (PRA). This Dechloromonas aromatica (strain RCB) protein is Anthranilate phosphoribosyltransferase.